A 685-amino-acid polypeptide reads, in one-letter code: UvrABC system protein B (685 aa).

The region spanning 30 to 188 (DGVLRGDRWQ…QELVSLHYIR (159 aa)) is the Helicase ATP-binding domain. An ATP-binding site is contributed by 43-50 (GVTGSGKT). The Beta-hairpin signature appears at 96–119 (YYDFYQPEAYLPALDKYIAKDLRI). The Helicase C-terminal domain maps to 435-597 (QIDDLLAEIR…ITPRSIRKSL (163 aa)). The 36-residue stretch at 641–676 (YAMVAELRLEMNEAAIQMEYEKAAYLRDEIARLMHG) folds into the UVR domain.

The protein belongs to the UvrB family. As to quaternary structure, forms a heterotetramer with UvrA during the search for lesions. Interacts with UvrC in an incision complex.

It is found in the cytoplasm. The UvrABC repair system catalyzes the recognition and processing of DNA lesions. A damage recognition complex composed of 2 UvrA and 2 UvrB subunits scans DNA for abnormalities. Upon binding of the UvrA(2)B(2) complex to a putative damaged site, the DNA wraps around one UvrB monomer. DNA wrap is dependent on ATP binding by UvrB and probably causes local melting of the DNA helix, facilitating insertion of UvrB beta-hairpin between the DNA strands. Then UvrB probes one DNA strand for the presence of a lesion. If a lesion is found the UvrA subunits dissociate and the UvrB-DNA preincision complex is formed. This complex is subsequently bound by UvrC and the second UvrB is released. If no lesion is found, the DNA wraps around the other UvrB subunit that will check the other stand for damage. The protein is UvrABC system protein B of Chlorobium phaeobacteroides (strain DSM 266 / SMG 266 / 2430).